The primary structure comprises 478 residues: Elongation factor Tu, chloroplastic (478 aa).

Residues 1–29 (MASISAATATSSTKLVSSNSTNPLLPSST) show a composition bias toward low complexity. The segment at 1–31 (MASISAATATSSTKLVSSNSTNPLLPSSTKP) is disordered. The transit peptide at 1–69 (MASISAATAT…THRHRRFTVR (69 aa)) directs the protein to the chloroplast. The region spanning 79-283 (KPHVNIGTIG…AVDSYIPIPV (205 aa)) is the tr-type G domain. The tract at residues 88–95 (GHVDHGKT) is G1. 88–95 (GHVDHGKT) lines the GTP pocket. A G2 region spans residues 129–133 (GITIN). The segment at 150–153 (DCPG) is G3. GTP contacts are provided by residues 150–154 (DCPGH) and 205–208 (NKQD). A G4 region spans residues 205 to 208 (NKQD). The G5 stretch occupies residues 243–245 (SAL).

This sequence belongs to the TRAFAC class translation factor GTPase superfamily. Classic translation factor GTPase family. EF-Tu/EF-1A subfamily.

It is found in the plastid. Its subcellular location is the chloroplast. This protein promotes the GTP-dependent binding of aminoacyl-tRNA to the A-site of ribosomes during protein biosynthesis. The chain is Elongation factor Tu, chloroplastic (TUFA) from Nicotiana tabacum (Common tobacco).